The chain runs to 170 residues: Putative zinc finger protein 542 (170 aa).

The KRAB domain occupies 1–42 (MLENYQNLVWLGLSISKSVISLLEKRKLPWIMAKEEIRGPLP). 2 C2H2-type zinc fingers span residues 98–120 (NVCK…KRNH) and 126–148 (NQCL…QRIH). The C2H2-type 3; degenerate zinc-finger motif lies at 154 to 170 (YKCNECIKTFNQRAHLT).

The protein belongs to the krueppel C2H2-type zinc-finger protein family.

Its subcellular location is the nucleus. May be involved in transcriptional regulation. The chain is Putative zinc finger protein 542 (ZNF542P) from Homo sapiens (Human).